The following is a 173-amino-acid chain: Inorganic pyrophosphatase (173 aa).

Substrate is bound by residues Lys29, Arg43, and Tyr55. Asp65, Asp70, and Asp102 together coordinate Mg(2+). Tyr141 contacts substrate.

This sequence belongs to the PPase family. In terms of assembly, homohexamer. The cofactor is Mg(2+).

It localises to the cytoplasm. It catalyses the reaction diphosphate + H2O = 2 phosphate + H(+). Functionally, catalyzes the hydrolysis of inorganic pyrophosphate (PPi) forming two phosphate ions. The sequence is that of Inorganic pyrophosphatase from Gluconobacter oxydans (strain 621H) (Gluconobacter suboxydans).